A 212-amino-acid polypeptide reads, in one-letter code: Secreted and transmembrane protein 1b (212 aa).

A signal peptide spans 1 to 28 (MLAYSVTSSGLFPRMLWALLLLAASLNA). The Extracellular segment spans residues 29–160 (HNDVWDEPCC…DKPPTAVRTE (132 aa)). Cysteines 38 and 55 form a disulfide. Residues Asn56, Asn85, Asn114, and Asn130 are each glycosylated (N-linked (GlcNAc...) asparagine). Residues 161–181 (VIIIIAIATTIIITGIGVFVW) form a helical membrane-spanning segment. Residues 182–212 (YKQFPVAPQIQMSVPCLIHGSPGIPYLTLPP) are Cytoplasmic-facing.

The protein belongs to the SECTM family. Interacts with CD7.

The protein resides in the cell membrane. Its subcellular location is the secreted. In terms of biological role, may be involved in thymocyte signaling. The sequence is that of Secreted and transmembrane protein 1b (Sectm1b) from Mus musculus (Mouse).